A 66-amino-acid polypeptide reads, in one-letter code: MPKLKTKSSVKKRFSVTATGKIKSTQSAKRHGMTKRSKRSIRVQRGTAIMNSSDSRIVKLFMPYSR.

Positions 20 to 40 (GKIKSTQSAKRHGMTKRSKRS) are disordered. Residues 28 to 40 (AKRHGMTKRSKRS) are compositionally biased toward basic residues.

This sequence belongs to the bacterial ribosomal protein bL35 family.

This Ehrlichia chaffeensis (strain ATCC CRL-10679 / Arkansas) protein is Large ribosomal subunit protein bL35.